Consider the following 100-residue polypeptide: Urease subunit gamma (100 aa).

The protein belongs to the urease gamma subunit family. Heterotrimer of UreA (gamma), UreB (beta) and UreC (alpha) subunits. Three heterotrimers associate to form the active enzyme.

Its subcellular location is the cytoplasm. The catalysed reaction is urea + 2 H2O + H(+) = hydrogencarbonate + 2 NH4(+). It functions in the pathway nitrogen metabolism; urea degradation; CO(2) and NH(3) from urea (urease route): step 1/1. This chain is Urease subunit gamma, found in Flavobacterium johnsoniae (strain ATCC 17061 / DSM 2064 / JCM 8514 / BCRC 14874 / CCUG 350202 / NBRC 14942 / NCIMB 11054 / UW101) (Cytophaga johnsonae).